The primary structure comprises 76 residues: Conotoxin Im6.9 (76 aa).

The first 19 residues, 1–19, serve as a signal peptide directing secretion; sequence MEKLTILLLVTAVLMSTQA. The propeptide occupies 20–45; sequence LMQSGIEKRQRAKIKFFSKRKTTAER. Cystine bridges form between C51–C65, C58–C69, and C64–C73.

Belongs to the conotoxin O2 superfamily. In terms of tissue distribution, expressed by the venom duct.

It is found in the secreted. Functionally, probable neurotoxin. This chain is Conotoxin Im6.9, found in Conus imperialis (Imperial cone).